We begin with the raw amino-acid sequence, 338 residues long: 1-aminocyclopropane-1-carboxylate deaminase (338 aa).

Lys51 is modified (N6-(pyridoxal phosphate)lysine). Ser78 acts as the Nucleophile in catalysis.

This sequence belongs to the ACC deaminase/D-cysteine desulfhydrase family. As to quaternary structure, homotrimer. Pyridoxal 5'-phosphate serves as cofactor.

It carries out the reaction 1-aminocyclopropane-1-carboxylate + H2O = 2-oxobutanoate + NH4(+). Its function is as follows. Catalyzes a cyclopropane ring-opening reaction, the irreversible conversion of 1-aminocyclopropane-1-carboxylate (ACC) to ammonia and alpha-ketobutyrate. Allows growth on ACC as a nitrogen source. This Burkholderia orbicola (strain MC0-3) protein is 1-aminocyclopropane-1-carboxylate deaminase.